Reading from the N-terminus, the 492-residue chain is G2/mitotic-specific cyclin CYB1 (492 aa).

Residues 1–176 are disordered; sequence MPQVTKTNNE…QPEVGERSQS (176 aa). Over residues 23–33 the composition is skewed to polar residues; the sequence is QESISTIKNTT. A compositionally biased stretch (low complexity) spans 34 to 58; it reads ISNSQHKQQTQQQISSPPQVSVTSS. Positions 59 to 83 are enriched in polar residues; the sequence is EGVSHVNTRQYLGDVSNQYITNAKP. Over residues 111-135 the composition is skewed to low complexity; the sequence is ASDNNNNGSTSSSSNSSNNNNNDAN.

It belongs to the cyclin family. Cyclin AB subfamily.

In terms of biological role, essential for the control of the cell cycle at the G2/M (mitosis) transition. Interacts with the CDC2 protein kinase to form MPF. G2/M cyclins accumulate steadily during G2 and are abruptly destroyed at mitosis. The chain is G2/mitotic-specific cyclin CYB1 (CYB1) from Candida albicans (Yeast).